The following is a 138-amino-acid chain: Basic phospholipase A2 homolog 7 (138 aa).

Positions Met-1 to Gly-16 are cleaved as a signal peptide. 6 cysteine pairs are disulfide-bonded: Cys-42-Cys-131, Cys-44-Cys-60, Cys-59-Cys-111, Cys-65-Cys-138, Cys-66-Cys-104, and Cys-91-Cys-102. Residues Lys-121 to Lys-133 form an important for membrane-damaging activities in eukaryotes and bacteria; heparin-binding region.

This sequence belongs to the phospholipase A2 family. Group II subfamily. K49 sub-subfamily. As to expression, expressed by the venom gland.

It localises to the secreted. Functionally, snake venom phospholipase A2 homolog that lacks enzymatic activity. Is myotoxic and displays edema-inducing activities. A model of myotoxic mechanism has been proposed: an apo Lys49-PLA2 is activated by the entrance of a hydrophobic molecule (e.g. fatty acid) at the hydrophobic channel of the protein leading to a reorientation of a monomer. This reorientation causes a transition between 'inactive' to 'active' states, causing alignment of C-terminal and membrane-docking sites (MDoS) side-by-side and putting the membrane-disruption sites (MDiS) in the same plane, exposed to solvent and in a symmetric position for both monomers. The MDoS region stabilizes the toxin on membrane by the interaction of charged residues with phospholipid head groups. Subsequently, the MDiS region destabilizes the membrane with penetration of hydrophobic residues. This insertion causes a disorganization of the membrane, allowing an uncontrolled influx of ions (i.e. calcium and sodium), and eventually triggering irreversible intracellular alterations and cell death. This chain is Basic phospholipase A2 homolog 7, found in Craspedocephalus gramineus (Bamboo pit viper).